The following is a 449-amino-acid chain: UPF0761 membrane protein Cpha266_1653 (449 aa).

6 helical membrane passes run 77 to 97 (LLSL…FPVF), 133 to 153 (SVPL…ISTI), 173 to 193 (FTLY…SLVA), 214 to 234 (LLSF…YMLV), 244 to 264 (AVYG…WFVF), and 277 to 297 (GALS…VVVL).

The protein belongs to the UPF0761 family.

The protein localises to the cell inner membrane. The polypeptide is UPF0761 membrane protein Cpha266_1653 (Chlorobium phaeobacteroides (strain DSM 266 / SMG 266 / 2430)).